We begin with the raw amino-acid sequence, 314 residues long: Ribosomal RNA small subunit methyltransferase H (314 aa).

S-adenosyl-L-methionine is bound by residues Gly35–His37, Asp55, Phe79, Asp101, and Gln108. Residues Gln276–Ala296 are disordered.

This sequence belongs to the methyltransferase superfamily. RsmH family.

The protein resides in the cytoplasm. The catalysed reaction is cytidine(1402) in 16S rRNA + S-adenosyl-L-methionine = N(4)-methylcytidine(1402) in 16S rRNA + S-adenosyl-L-homocysteine + H(+). In terms of biological role, specifically methylates the N4 position of cytidine in position 1402 (C1402) of 16S rRNA. The sequence is that of Ribosomal RNA small subunit methyltransferase H from Pectobacterium atrosepticum (strain SCRI 1043 / ATCC BAA-672) (Erwinia carotovora subsp. atroseptica).